Here is a 156-residue protein sequence, read N- to C-terminus: Transcription elongation factor GreA (156 aa).

A coiled-coil region spans residues 45 to 66; that stretch reads NAEYHSAKEKQSFIEGRIKELE.

The protein belongs to the GreA/GreB family.

In terms of biological role, necessary for efficient RNA polymerase transcription elongation past template-encoded arresting sites. The arresting sites in DNA have the property of trapping a certain fraction of elongating RNA polymerases that pass through, resulting in locked ternary complexes. Cleavage of the nascent transcript by cleavage factors such as GreA or GreB allows the resumption of elongation from the new 3'terminus. GreA releases sequences of 2 to 3 nucleotides. The chain is Transcription elongation factor GreA from Jannaschia sp. (strain CCS1).